The following is a 298-amino-acid chain: Beta-soluble NSF attachment protein (298 aa).

Belongs to the SNAP family. In terms of assembly, interacts with PRKCABP, and disrupts the interaction between GRIA2 and PRKCABP, leading to the internalization of GRIA2. Brain.

The protein resides in the membrane. Functionally, required for vesicular transport between the endoplasmic reticulum and the Golgi apparatus. This Bos taurus (Bovine) protein is Beta-soluble NSF attachment protein (NAPB).